The chain runs to 444 residues: MSQSYINVIGAGLAGSEAAYQIAKRGIPVKLYEMRGVKSTPQHKTADFAELVCSNSLRGDALTNAVGLLKEEMRRLDSVILKSAEATRVPAGGALAVDREGFSQMVTELVTNHPLIEVIREEITEIPNDDITVIATGPLTSDALAEKIHALNGGNGFYFYDAAAPIIDVNTIDMTKIYLKSRYDKGEAAYLNAPMTKQEFMDFHDALVNAEEAPLNSFEKEKYFEGCMPIEVMAKRGIKTMLYGPMKPVGLEYPDDYQGPRDGEYKTPYAVVQLRQDNAAGSLYNIVGFQTHLKWGEQKRVFQMIPGLENAEFVRYGVMHRNSYMDSPNLLEQTFRSKKQPNLFFAGQMTGVEGYVESAASGLVAGINAARLFKGEEALVFPETTAIGSLPHYVTHADSKHFQPMNVNFGIIKELDGPRIRDKKERYEKIAERALQDLAPYLDK.

10 to 15 (GAGLAG) is a binding site for FAD.

It belongs to the MnmG family. TrmFO subfamily. The cofactor is FAD.

The protein resides in the cytoplasm. It catalyses the reaction uridine(54) in tRNA + (6R)-5,10-methylene-5,6,7,8-tetrahydrofolate + NADH + H(+) = 5-methyluridine(54) in tRNA + (6S)-5,6,7,8-tetrahydrofolate + NAD(+). The enzyme catalyses uridine(54) in tRNA + (6R)-5,10-methylene-5,6,7,8-tetrahydrofolate + NADPH + H(+) = 5-methyluridine(54) in tRNA + (6S)-5,6,7,8-tetrahydrofolate + NADP(+). Catalyzes the folate-dependent formation of 5-methyl-uridine at position 54 (M-5-U54) in all tRNAs. This chain is Methylenetetrahydrofolate--tRNA-(uracil-5-)-methyltransferase TrmFO, found in Streptococcus gordonii (strain Challis / ATCC 35105 / BCRC 15272 / CH1 / DL1 / V288).